We begin with the raw amino-acid sequence, 453 residues long: Keratin, type I cytoskeletal 15 (453 aa).

Residues 1 to 102 (MATTLLQTSS…GGDGGLLSGN (102 aa)) are head. Phosphoserine occurs at positions 16, 17, 34, 48, and 56. Residues 103-138 (EKITMQNLNDRLASYLEKVRALEEANADLEVKIRDW) form a coil 1A region. Residues 103–415 (EKITMQNLND…SLLEGQDARM (313 aa)) enclose the IF rod domain. Residues 139-157 (YQRQSPTSPERDYSPYFKT) are linker 1. The tract at residues 158–249 (TDELRDKILA…KNHEEEMKEF (92 aa)) is coil 1B. Positions 250–269 (SNQLAGQVNVEMDAAPGVDL) are linker 12. Positions 270–411 (TRVLSEMREQ…ATYHSLLEGQ (142 aa)) are coil 2. A Glycyl lysine isopeptide (Lys-Gly) (interchain with G-Cter in SUMO2) cross-link involves residue Lys-298. Phosphothreonine is present on residues Thr-299 and Thr-321. Residues 412-453 (DARMAGIGTGEASLGGGGGGKVRINVEESVDGKVVSSRKREI) form a tail region. Residue Lys-444 forms a Glycyl lysine isopeptide (Lys-Gly) (interchain with G-Cter in SUMO1); alternate linkage. A Glycyl lysine isopeptide (Lys-Gly) (interchain with G-Cter in SUMO2); alternate cross-link involves residue Lys-444.

This sequence belongs to the intermediate filament family. Heterotetramer of two type I and two type II keratins. Interacts with NOD2. Expressed in the basal cell layers of several stratified epithelia including esophagus, tongue, stomach, epidermis and hair follicle. In the hair follicle, expression is detected mainly in the basal layer of the outer root sheath (ORS), except just above the follicle bulb where it occurs throughout its thickness. Low expression levels are seen in the single layer of ORS cells around the base of the follicle which increases in the palisade-like cells of the bulb. Also expressed in the basal cells of the sebaceous glands, and expression in the epidermis occurs in a punctate pattern.

The polypeptide is Keratin, type I cytoskeletal 15 (Ovis aries (Sheep)).